The chain runs to 407 residues: Carbamoyl phosphate synthase small chain (407 aa).

The segment at 1-203 (MSQNESGTIA…EPCGEYEGKE (203 aa)) is CPSase. Residues serine 61, glycine 255, and glycine 257 each coordinate L-glutamine. In terms of domain architecture, Glutamine amidotransferase type-1 spans 207 to 405 (TVAAVDLGIK…CELMKNNSKE (199 aa)). Cysteine 283 (nucleophile) is an active-site residue. Phenylalanine 284, glutamine 287, asparagine 325, glycine 327, and phenylalanine 328 together coordinate L-glutamine. Catalysis depends on residues histidine 378 and glutamate 380.

It belongs to the CarA family. Composed of two chains; the small (or glutamine) chain promotes the hydrolysis of glutamine to ammonia, which is used by the large (or ammonia) chain to synthesize carbamoyl phosphate. Tetramer of heterodimers (alpha,beta)4.

The catalysed reaction is hydrogencarbonate + L-glutamine + 2 ATP + H2O = carbamoyl phosphate + L-glutamate + 2 ADP + phosphate + 2 H(+). It catalyses the reaction L-glutamine + H2O = L-glutamate + NH4(+). The protein operates within amino-acid biosynthesis; L-arginine biosynthesis; carbamoyl phosphate from bicarbonate: step 1/1. It functions in the pathway pyrimidine metabolism; UMP biosynthesis via de novo pathway; (S)-dihydroorotate from bicarbonate: step 1/3. Functionally, small subunit of the glutamine-dependent carbamoyl phosphate synthetase (CPSase). CPSase catalyzes the formation of carbamoyl phosphate from the ammonia moiety of glutamine, carbonate, and phosphate donated by ATP, constituting the first step of 2 biosynthetic pathways, one leading to arginine and/or urea and the other to pyrimidine nucleotides. The small subunit (glutamine amidotransferase) binds and cleaves glutamine to supply the large subunit with the substrate ammonia. The polypeptide is Carbamoyl phosphate synthase small chain (Bifidobacterium longum (strain NCC 2705)).